Reading from the N-terminus, the 493-residue chain is uncharacterized protein (493 aa).

The interval 316–403 (LNMVNFGPDD…NSVDNSVHDS (88 aa)) is disordered. Low complexity predominate over residues 338–353 (ESQNNSESNSESITES). A compositionally biased stretch (polar residues) spans 371–398 (SQDNDTVQIDKSTSSDSVHNYFDNSVDN).

The protein belongs to the mimivirus R69 family.

This is an uncharacterized protein from Acanthamoeba polyphaga (Amoeba).